Here is a 277-residue protein sequence, read N- to C-terminus: Orotidine 5'-phosphate decarboxylase (277 aa).

Lys-93 (proton donor) is an active-site residue.

It belongs to the OMP decarboxylase family. Type 2 subfamily.

The catalysed reaction is orotidine 5'-phosphate + H(+) = UMP + CO2. It participates in pyrimidine metabolism; UMP biosynthesis via de novo pathway; UMP from orotate: step 2/2. This Haloarcula marismortui (strain ATCC 43049 / DSM 3752 / JCM 8966 / VKM B-1809) (Halobacterium marismortui) protein is Orotidine 5'-phosphate decarboxylase.